A 360-amino-acid polypeptide reads, in one-letter code: MLLWLGEYLTQFYSAFNVFSYLTFRAIISTLTALFISLYFGPKLIRYLQKMQIGQTVRDDGPESHLSKSGTPTMGGLLILASIVISVLLWADLSNIYVWVVLFVIVSFGIVGFVDDYRKVIRKDANGLIARWKYFWQTVIGLSTALFLYFIAQGPNETALLVPFVKELLPQLGIFYVVMSYFVIVGTSNAVNLTDGLDGLAIVPTIMVAGAFALFAYVTGHVNFSAYLNIPHIALTSELVIVCTAIVGAGLGFLWFNTYPAQVFMGDVGSLALGAALGVIAILVRQELVLFIMGGVFVMETVSVILQVGSYKMRGQRIFRMAPIHHHYELKGWPEPRVIVRFWIISLILVLIGLATLKLR.

10 helical membrane-spanning segments follow: residues 18-38, 73-93, 94-114, 134-154, 168-188, 199-219, 239-259, 263-283, 288-308, and 338-358; these read VFSYLTFRAIISTLTALFISL, TMGGLLILASIVISVLLWADL, SNIYVWVVLFVIVSFGIVGFV, YFWQTVIGLSTALFLYFIAQG, LLPQLGIFYVVMSYFVIVGTS, GLAIVPTIMVAGAFALFAYVT, LVIVCTAIVGAGLGFLWFNTY, VFMGDVGSLALGAALGVIAIL, LVLFIMGGVFVMETVSVILQV, and VIVRFWIISLILVLIGLATLK.

Belongs to the glycosyltransferase 4 family. MraY subfamily. Mg(2+) is required as a cofactor.

The protein resides in the cell inner membrane. It catalyses the reaction UDP-N-acetyl-alpha-D-muramoyl-L-alanyl-gamma-D-glutamyl-meso-2,6-diaminopimeloyl-D-alanyl-D-alanine + di-trans,octa-cis-undecaprenyl phosphate = di-trans,octa-cis-undecaprenyl diphospho-N-acetyl-alpha-D-muramoyl-L-alanyl-D-glutamyl-meso-2,6-diaminopimeloyl-D-alanyl-D-alanine + UMP. Its pathway is cell wall biogenesis; peptidoglycan biosynthesis. Functionally, catalyzes the initial step of the lipid cycle reactions in the biosynthesis of the cell wall peptidoglycan: transfers peptidoglycan precursor phospho-MurNAc-pentapeptide from UDP-MurNAc-pentapeptide onto the lipid carrier undecaprenyl phosphate, yielding undecaprenyl-pyrophosphoryl-MurNAc-pentapeptide, known as lipid I. In Colwellia psychrerythraea (strain 34H / ATCC BAA-681) (Vibrio psychroerythus), this protein is Phospho-N-acetylmuramoyl-pentapeptide-transferase.